The sequence spans 228 residues: Transcription repressor OFP8 (228 aa).

Low complexity-rich tracts occupy residues Met1–Arg14, Ala54–Ser79, and Glu92–Gln101. Disordered stretches follow at residues Met1–Ile21 and Ser36–Glu143. Residues Arg107–Ala120 are compositionally biased toward basic residues. An OVATE domain is found at Val157–Arg216.

Interacts with GSK2. In terms of processing, phosphorylated on serine and threonine residues by GSK2. Dephosphorylated during response to brassinosteroid. Expressed in roots, stems, stem nodes, young leaves, leaf sheaths, lamina joints, young spikelets, inflorescences, stamens and ovaries, embryos and seeds.

Its subcellular location is the nucleus. The protein localises to the cytoplasm. Its function is as follows. Probable transcriptional repressor that regulates multiple aspects of plant growth and development, partly through brassinosteroid (BR) signaling pathway. Acts downstream of the kinase GSK2, a negative regulator of BR signaling. The chain is Transcription repressor OFP8 from Oryza sativa subsp. japonica (Rice).